The chain runs to 339 residues: Holliday junction branch migration complex subunit RuvB (339 aa).

Positions 1-181 are large ATPase domain (RuvB-L); sequence MEERLVSGYE…FGMVHRLEFY (181 aa). Residues Leu-20, Arg-21, Gly-62, Lys-65, Thr-66, Thr-67, 128–130, Arg-171, Tyr-181, and Arg-218 contribute to the ATP site; that span reads EDF. Position 66 (Thr-66) interacts with Mg(2+). Positions 182–252 are small ATPAse domain (RuvB-S); the sequence is SVEELMLIIN…NAKAALDLLE (71 aa). A head domain (RuvB-H) region spans residues 255–339; sequence ELGLDPTDRL…NKNAGELSLW (85 aa). Residues Arg-310 and Arg-315 each contribute to the DNA site.

It belongs to the RuvB family. Homohexamer. Forms an RuvA(8)-RuvB(12)-Holliday junction (HJ) complex. HJ DNA is sandwiched between 2 RuvA tetramers; dsDNA enters through RuvA and exits via RuvB. An RuvB hexamer assembles on each DNA strand where it exits the tetramer. Each RuvB hexamer is contacted by two RuvA subunits (via domain III) on 2 adjacent RuvB subunits; this complex drives branch migration. In the full resolvosome a probable DNA-RuvA(4)-RuvB(12)-RuvC(2) complex forms which resolves the HJ.

Its subcellular location is the cytoplasm. The catalysed reaction is ATP + H2O = ADP + phosphate + H(+). Functionally, the RuvA-RuvB-RuvC complex processes Holliday junction (HJ) DNA during genetic recombination and DNA repair, while the RuvA-RuvB complex plays an important role in the rescue of blocked DNA replication forks via replication fork reversal (RFR). RuvA specifically binds to HJ cruciform DNA, conferring on it an open structure. The RuvB hexamer acts as an ATP-dependent pump, pulling dsDNA into and through the RuvAB complex. RuvB forms 2 homohexamers on either side of HJ DNA bound by 1 or 2 RuvA tetramers; 4 subunits per hexamer contact DNA at a time. Coordinated motions by a converter formed by DNA-disengaged RuvB subunits stimulates ATP hydrolysis and nucleotide exchange. Immobilization of the converter enables RuvB to convert the ATP-contained energy into a lever motion, pulling 2 nucleotides of DNA out of the RuvA tetramer per ATP hydrolyzed, thus driving DNA branch migration. The RuvB motors rotate together with the DNA substrate, which together with the progressing nucleotide cycle form the mechanistic basis for DNA recombination by continuous HJ branch migration. Branch migration allows RuvC to scan DNA until it finds its consensus sequence, where it cleaves and resolves cruciform DNA. This is Holliday junction branch migration complex subunit RuvB from Carboxydothermus hydrogenoformans (strain ATCC BAA-161 / DSM 6008 / Z-2901).